Here is a 256-residue protein sequence, read N- to C-terminus: Imidazole glycerol phosphate synthase subunit HisF (256 aa).

Catalysis depends on residues aspartate 12 and aspartate 131.

Belongs to the HisA/HisF family. Heterodimer of HisH and HisF.

The protein resides in the cytoplasm. The enzyme catalyses 5-[(5-phospho-1-deoxy-D-ribulos-1-ylimino)methylamino]-1-(5-phospho-beta-D-ribosyl)imidazole-4-carboxamide + L-glutamine = D-erythro-1-(imidazol-4-yl)glycerol 3-phosphate + 5-amino-1-(5-phospho-beta-D-ribosyl)imidazole-4-carboxamide + L-glutamate + H(+). The protein operates within amino-acid biosynthesis; L-histidine biosynthesis; L-histidine from 5-phospho-alpha-D-ribose 1-diphosphate: step 5/9. IGPS catalyzes the conversion of PRFAR and glutamine to IGP, AICAR and glutamate. The HisF subunit catalyzes the cyclization activity that produces IGP and AICAR from PRFAR using the ammonia provided by the HisH subunit. In Pseudomonas fluorescens (strain ATCC BAA-477 / NRRL B-23932 / Pf-5), this protein is Imidazole glycerol phosphate synthase subunit HisF.